A 622-amino-acid polypeptide reads, in one-letter code: MTEFDYDELGLVAGLEIHQQLDTATKLFCACPTTRREPAEADRTFTRYLHPTRSELGEIDEAALEESRVEREFEYLAYDTTCLVEEDDEPPHRLDEDALAAALEIGHLLGMDAVDRAHVMRKVVIDGSNTGGFQRSTMVAEGGAIDTSEGPVGIEDLMLEEESAQRIEDREDGVLYSLDRLGIPLVEIGTKPDISSPAQAREAAERIGMLLRSTGKVKRGLGTIRQDVNVSIADGARVEMKGVQSLDDIDDLVREEVRRQVELLDIVDELDARDAAVGKPRDVTDVFADTESGVIRGALDDGGEVHAVPLHGFDGLVGRELQADRRLGTEFSDHATRHGAGGIFHTDELPAYGVTAAEVAALRDAVGAGEDDAVAIVADDPETAAQSIQAVAERAETAMAGVPEETRGANDDGTSKYLRPLPGAARMYPETDVPPVDPDPSAVETPELLTEKVERYQADFDLDAGLAEQVAYGRRWQLFEQQVEAGVDATLAAQTLESTVTELRRDDVPVGRLTDAHFRGVLGLVADGDLAQEGVPELLAALAEQPGSDPAVLAEELGLGSAAEDEVREAVVGVVERNSDQVAAEGMGAFSALMGECMGALRGKADGDLVSEVLREEIQQRS.

The protein belongs to the GatB/GatE family. GatE subfamily. Heterodimer of GatD and GatE.

The enzyme catalyses L-glutamyl-tRNA(Gln) + L-glutamine + ATP + H2O = L-glutaminyl-tRNA(Gln) + L-glutamate + ADP + phosphate + H(+). Functionally, allows the formation of correctly charged Gln-tRNA(Gln) through the transamidation of misacylated Glu-tRNA(Gln) in organisms which lack glutaminyl-tRNA synthetase. The reaction takes place in the presence of glutamine and ATP through an activated gamma-phospho-Glu-tRNA(Gln). The GatDE system is specific for glutamate and does not act on aspartate. The polypeptide is Glutamyl-tRNA(Gln) amidotransferase subunit E (Halobacterium salinarum (strain ATCC 29341 / DSM 671 / R1)).